Consider the following 70-residue polypeptide: Conotoxin Mr3.8 (70 aa).

The N-terminal stretch at 1 to 24 (MLKMGVVLFIFLVLFPLATLQLDA) is a signal peptide. A propeptide spanning residues 25 to 54 (DQPVERYAKNKQLFNPHKRRGIILRAPGKR) is cleaved from the precursor. 3 disulfide bridges follow: C55–C67, C56–C68, and C61–C65.

Belongs to the conotoxin M superfamily. As to expression, expressed by the venom duct.

It is found in the secreted. In vitro, inhibits proliferation of the mice ovarian cancer cells ID8. This is Conotoxin Mr3.8 from Conus marmoreus (Marble cone).